Here is a 133-residue protein sequence, read N- to C-terminus: Large ribosomal subunit protein uL22 (133 aa).

Belongs to the universal ribosomal protein uL22 family. In terms of assembly, part of the 50S ribosomal subunit.

This protein binds specifically to 23S rRNA; its binding is stimulated by other ribosomal proteins, e.g. L4, L17, and L20. It is important during the early stages of 50S assembly. It makes multiple contacts with different domains of the 23S rRNA in the assembled 50S subunit and ribosome. Functionally, the globular domain of the protein is located near the polypeptide exit tunnel on the outside of the subunit, while an extended beta-hairpin is found that lines the wall of the exit tunnel in the center of the 70S ribosome. The chain is Large ribosomal subunit protein uL22 from Granulibacter bethesdensis (strain ATCC BAA-1260 / CGDNIH1).